The sequence spans 92 residues: Large ribosomal subunit protein bL27 (92 aa).

The propeptide occupies 1 to 9 (MIKANLQLF).

The protein belongs to the bacterial ribosomal protein bL27 family. The N-terminus is cleaved by ribosomal processing cysteine protease Prp.

In Acetivibrio thermocellus (strain ATCC 27405 / DSM 1237 / JCM 9322 / NBRC 103400 / NCIMB 10682 / NRRL B-4536 / VPI 7372) (Clostridium thermocellum), this protein is Large ribosomal subunit protein bL27.